Consider the following 241-residue polypeptide: MAPK phosphothreonine lyase (241 aa).

Histidine 106 (proton donor) is an active-site residue. Lysine 136 (proton acceptor) is an active-site residue.

It belongs to the phosphothreonine lyase family.

Its subcellular location is the secreted. Its function is as follows. Secreted effector that irreversibly inactivates host MAP kinases by catalyzing the dephosphorylation of the phosphothreonine residue in the pT-X-pY motif present in MAPKs, via a beta-elimination reaction leading to a dehydrobutyrine residue. The polypeptide is MAPK phosphothreonine lyase (spvC) (Salmonella enteritidis).